The following is a 549-amino-acid chain: Putative lipase ATG15 (549 aa).

Over 1–19 (MKQDLYKESSPPPSTTKSK) the chain is Cytoplasmic. A helical; Signal-anchor for type II membrane protein membrane pass occupies residues 20–42 (GLYVIVAALVTTAIYLLYSQGYS). The Lumenal segment spans residues 43–549 (NTHGEKDMPS…SHTVTHVTMA (507 aa)). 2 N-linked (GlcNAc...) asparagine glycosylation sites follow: asparagine 204 and asparagine 315. The Charge relay system role is filled by serine 331. Residue asparagine 448 is glycosylated (N-linked (GlcNAc...) asparagine). The tract at residues 474–510 (DDDDKDKKKKKKTSTSSSVVSKTKTSTSSTVATNTMP) is disordered. Low complexity predominate over residues 487–504 (STSSSVVSKTKTSTSSTV).

The protein belongs to the AB hydrolase superfamily. Lipase family. As to quaternary structure, binds to both phosphatidylinositol (PI) and phosphatidylinositol 3,5-bisphosphate (PIP2).

It is found in the endosome. The protein resides in the multivesicular body membrane. The protein localises to the prevacuolar compartment membrane. It catalyses the reaction a triacylglycerol + H2O = a diacylglycerol + a fatty acid + H(+). Functionally, lipase which is essential for lysis of subvacuolar cytoplasm to vacuole targeted bodies and intravacuolar autophagic bodies. Involved in the lysis of intravacuolar multivesicular body (MVB) vesicles. The intravacuolar membrane disintegration by ATG15 is critical to life span extension. The protein is Putative lipase ATG15 (ATG15) of Yarrowia lipolytica (strain CLIB 122 / E 150) (Yeast).